The chain runs to 60 residues: Regulatory protein DegR (60 aa).

Its function is as follows. Stabilizes the phosphorylated form of DegU, leading to enhanced production of levansucrase, alkaline protease, and neutral protease. This Bacillus subtilis subsp. natto protein is Regulatory protein DegR (degR).